Consider the following 740-residue polypeptide: Eukaryotic translation initiation factor 3 subunit B (740 aa).

The span at Met-1–Glu-10 shows a compositional bias: polar residues. A disordered region spans residues Met-1 to Asp-22. Over residues Leu-13–Asp-22 the composition is skewed to acidic residues. Positions Thr-40–Asp-126 constitute an RRM domain. WD repeat units follow at residues Ala-193–Gln-230, Pro-232–Val-289, Glu-302–Lys-343, Ile-513–Glu-556, and Val-571–Ala-609. The segment at Asp-695–Glu-721 is disordered.

The protein belongs to the eIF-3 subunit B family. As to quaternary structure, component of the eukaryotic translation initiation factor 3 (eIF-3) complex.

The protein resides in the cytoplasm. In terms of biological role, RNA-binding component of the eukaryotic translation initiation factor 3 (eIF-3) complex, which is involved in protein synthesis of a specialized repertoire of mRNAs and, together with other initiation factors, stimulates binding of mRNA and methionyl-tRNAi to the 40S ribosome. The eIF-3 complex specifically targets and initiates translation of a subset of mRNAs involved in cell proliferation. The polypeptide is Eukaryotic translation initiation factor 3 subunit B (prt1) (Aspergillus niger (strain ATCC MYA-4892 / CBS 513.88 / FGSC A1513)).